Consider the following 239-residue polypeptide: Metallo-beta-lactamase IND-1 (239 aa).

The first 20 residues, 1-20 (MKKSIRFFIVSILLSPFASA), serve as a signal peptide directing secretion. Zn(2+) contacts are provided by His-96, His-98, Asp-100, His-159, and Cys-178. Lys-181 lines the a beta-lactam pocket. His-220 lines the Zn(2+) pocket.

Belongs to the metallo-beta-lactamase superfamily. Class-B beta-lactamase family. In terms of assembly, monomer. Requires Zn(2+) as cofactor.

The protein resides in the periplasm. It carries out the reaction a beta-lactam + H2O = a substituted beta-amino acid. Its activity is regulated as follows. Inhibited by chelating agents such as EDTA. Not susceptible to inactivation by the beta-lactamase-blocking agent clavulanic acid. Its function is as follows. Class B beta-lactamase which confers resistance to the beta-lactam antibiotics, including penicillins, cephalosporins and carbapenems. Acts via hydrolysis of the beta-lactam ring. Has penicillin-, cephalosporin- and carbapenem-hydrolyzing activities. In Chryseobacterium indologenes (Flavobacterium indologenes), this protein is Metallo-beta-lactamase IND-1.